The chain runs to 367 residues: Glutamate 5-kinase (367 aa).

Lysine 10 serves as a coordination point for ATP. Residues serine 50, aspartate 137, and asparagine 149 each contribute to the substrate site. ATP-binding positions include 169–170 (TD) and 211–217 (TGGMGTK). The PUA domain occupies 275-353 (AGEITVDAGA…QQIDAILGYE (79 aa)).

The protein belongs to the glutamate 5-kinase family.

It localises to the cytoplasm. The enzyme catalyses L-glutamate + ATP = L-glutamyl 5-phosphate + ADP. Its pathway is amino-acid biosynthesis; L-proline biosynthesis; L-glutamate 5-semialdehyde from L-glutamate: step 1/2. In terms of biological role, catalyzes the transfer of a phosphate group to glutamate to form L-glutamate 5-phosphate. This Klebsiella pneumoniae subsp. pneumoniae (strain ATCC 700721 / MGH 78578) protein is Glutamate 5-kinase.